Reading from the N-terminus, the 179-residue chain is Adenine phosphoribosyltransferase (179 aa).

The protein belongs to the purine/pyrimidine phosphoribosyltransferase family. As to quaternary structure, homodimer.

It is found in the cytoplasm. It catalyses the reaction AMP + diphosphate = 5-phospho-alpha-D-ribose 1-diphosphate + adenine. The protein operates within purine metabolism; AMP biosynthesis via salvage pathway; AMP from adenine: step 1/1. Its function is as follows. Catalyzes a salvage reaction resulting in the formation of AMP, that is energically less costly than de novo synthesis. This Azorhizobium caulinodans (strain ATCC 43989 / DSM 5975 / JCM 20966 / LMG 6465 / NBRC 14845 / NCIMB 13405 / ORS 571) protein is Adenine phosphoribosyltransferase.